Reading from the N-terminus, the 711-residue chain is K(+)-insensitive pyrophosphate-energized proton pump (711 aa).

5 consecutive transmembrane segments (helical) span residues 7-27 (LIYG…KFIF), 58-78 (IASL…YGHL), 85-105 (ALSF…CSAL), 145-165 (LAVT…YGGL), and 179-199 (IVGF…GGGI). Lys-202 is a substrate binding site. 3 residues coordinate Mg(2+): Asp-205, Asp-209, and Asp-235. A run of 6 helical transmembrane segments spans residues 251-271 (TAAE…IFGW), 274-294 (ILFP…GIFF), 311-331 (GYFV…KVML), 343-363 (YLLL…FVFL), 403-423 (LPVI…EMAI), and 431-451 (LYGT…ILAM). Asp-459 lines the Mg(2+) pocket. 4 helical membrane-spanning segments follow: residues 495 to 515 (YAIG…LDEV), 535 to 555 (EVFI…STAI), 602 to 622 (EMVI…VILG), and 624 to 644 (EAAA…ALYL). Positions 652, 678, and 682 each coordinate Ca(2+). Lys-685 provides a ligand contact to substrate. A helical membrane pass occupies residues 690-710 (PSLHVLIKLISTITLVFVALF).

It belongs to the H(+)-translocating pyrophosphatase (TC 3.A.10) family. K(+)-insensitive subfamily. As to quaternary structure, homodimer. Mg(2+) is required as a cofactor.

It localises to the cell membrane. The catalysed reaction is diphosphate + H2O + H(+)(in) = 2 phosphate + 2 H(+)(out). Proton pump that utilizes the energy of pyrophosphate hydrolysis as the driving force for proton movement across the membrane. Generates a proton motive force. This chain is K(+)-insensitive pyrophosphate-energized proton pump, found in Caldanaerobacter subterraneus subsp. tengcongensis (strain DSM 15242 / JCM 11007 / NBRC 100824 / MB4) (Thermoanaerobacter tengcongensis).